Here is a 427-residue protein sequence, read N- to C-terminus: UDP-N-acetylglucosamine--N-acetylmuramyl-(pentapeptide) pyrophosphoryl-undecaprenol N-acetylglucosamine transferase (427 aa).

Residues 29–31 (TGG), Asn-141, Arg-177, Ser-205, Ile-258, and Gln-303 contribute to the UDP-N-acetyl-alpha-D-glucosamine site. A disordered region spans residues 408–427 (SLHPIPDSRFPIRTSAGGAQ).

The protein belongs to the glycosyltransferase 28 family. MurG subfamily.

The protein localises to the cell inner membrane. The catalysed reaction is di-trans,octa-cis-undecaprenyl diphospho-N-acetyl-alpha-D-muramoyl-L-alanyl-D-glutamyl-meso-2,6-diaminopimeloyl-D-alanyl-D-alanine + UDP-N-acetyl-alpha-D-glucosamine = di-trans,octa-cis-undecaprenyl diphospho-[N-acetyl-alpha-D-glucosaminyl-(1-&gt;4)]-N-acetyl-alpha-D-muramoyl-L-alanyl-D-glutamyl-meso-2,6-diaminopimeloyl-D-alanyl-D-alanine + UDP + H(+). The protein operates within cell wall biogenesis; peptidoglycan biosynthesis. Its function is as follows. Cell wall formation. Catalyzes the transfer of a GlcNAc subunit on undecaprenyl-pyrophosphoryl-MurNAc-pentapeptide (lipid intermediate I) to form undecaprenyl-pyrophosphoryl-MurNAc-(pentapeptide)GlcNAc (lipid intermediate II). This chain is UDP-N-acetylglucosamine--N-acetylmuramyl-(pentapeptide) pyrophosphoryl-undecaprenol N-acetylglucosamine transferase, found in Xanthomonas campestris pv. campestris (strain 8004).